A 185-amino-acid chain; its full sequence is Threonylcarbamoyl-AMP synthase (185 aa).

The 182-residue stretch at 4-185 (SWRVQQAAQD…IATAQIVRAG (182 aa)) folds into the YrdC-like domain.

This sequence belongs to the SUA5 family. TsaC subfamily.

The protein resides in the cytoplasm. It carries out the reaction L-threonine + hydrogencarbonate + ATP = L-threonylcarbamoyladenylate + diphosphate + H2O. Functionally, required for the formation of a threonylcarbamoyl group on adenosine at position 37 (t(6)A37) in tRNAs that read codons beginning with adenine. Catalyzes the conversion of L-threonine, HCO(3)(-)/CO(2) and ATP to give threonylcarbamoyl-AMP (TC-AMP) as the acyladenylate intermediate, with the release of diphosphate. This is Threonylcarbamoyl-AMP synthase from Pseudomonas syringae pv. syringae (strain B728a).